Here is a 1577-residue protein sequence, read N- to C-terminus: Vacuolar protein sorting/targeting protein PEP1 (1577 aa).

The signal sequence occupies residues 1 to 21 (MILLHFVYSLWALLLIPLINA). At 22 to 1391 (EEFTPKVTKT…EFKEKYSVSA (1370 aa)) the chain is on the lumenal side. BNR repeat units lie at residues 58–68 (ISFDDGETWEK) and 101–111 (YITNDQGKSWE). N-linked (GlcNAc...) asparagine glycans are attached at residues N121 and N168. BNR repeat units lie at residues 179-187 (SNDGGKSFS) and 414-423 (ISVDNGLTWT). A glycan (N-linked (GlcNAc...) asparagine) is linked at N445. BNR repeat units lie at residues 485-495 (FISRDGGLTWK), 531-541 (YYSLDQGKTWT), and 762-771 (YISHDGGQTI). Residue N791 is glycosylated (N-linked (GlcNAc...) asparagine). The stretch at 859–869 (YLTNDGGETFT) is one BNR 8 repeat. N-linked (GlcNAc...) asparagine glycosylation is present at N1008. 2 BNR repeats span residues 1141–1150 (FFTTDGGETW) and 1183–1192 (YSTDFGKTWK). The N-linked (GlcNAc...) asparagine glycan is linked to N1301. The helical transmembrane segment at 1392 to 1412 (GPFAFIFISILLIIFFAAWFV) threads the bilayer. Residues 1413 to 1577 (YDRGIRRNGG…DSTAPSNENQ (165 aa)) are Cytoplasmic-facing. Positions 1531-1577 (DDVPTLEEEHTSYTDQPTTTDVPDALPEGNEENIDRPDSTAPSNENQ) are disordered.

Belongs to the VPS10-related sortilin family.

It localises to the golgi apparatus. The protein resides in the trans-Golgi network membrane. Its subcellular location is the prevacuolar compartment membrane. In terms of biological role, functions as a sorting receptor in the Golgi compartment required for the intracellular sorting and delivery of soluble vacuolar proteins, like carboxypeptidase Y (CPY) and proteinase A. Executes multiple rounds of sorting by cycling between the late Golgi and a prevacuolar endosome-like compartment. Binds the Golgi-modified P2 form of CPY, and this interaction is dependent on the presence of an intact CPY vacuolar protein sorting signal. The polypeptide is Vacuolar protein sorting/targeting protein PEP1 (PEP1) (Saccharomyces cerevisiae (strain Lalvin EC1118 / Prise de mousse) (Baker's yeast)).